The chain runs to 505 residues: Cytochrome P450 monooxygenase iliC (505 aa).

The helical transmembrane segment at 6 to 26 (LIAQHSLTLTIASSVLLVFLL) threads the bilayer. C453 is a binding site for heme.

Belongs to the cytochrome P450 family. Heme is required as a cofactor.

The protein resides in the membrane. The catalysed reaction is (3E,5S)-3-[(2E,4E,8S,10E,12Z)-1-hydroxy-4,8-dimethyltetradeca-2,4,10,12-tetraen-1-ylidene]-5-[(4-hydroxyphenyl)methyl]pyrrolidine-2,4-dione + reduced [NADPH--hemoprotein reductase] + O2 = 3-[(2E,4E,8S,10E,12Z)-4,8-dimethyltetradeca-2,4,10,12-tetraenoyl]-4-hydroxy-5-(4-hydroxyphenyl)-1,2-dihydropyridin-2-one + oxidized [NADPH--hemoprotein reductase] + 2 H2O. The protein operates within mycotoxin biosynthesis. Functionally, cytochrome P450 monooxygenase; part of the gene cluster that mediates the biosynthesis of ilicicolin H, a 4-hydroxy-2-pyridonealkaloid that has potent and broad antifungal activities by inhibiting the mitochondrial respiration chain. IliC catalyzes the ring expansion of the tetramate intermediate to the acyclic 2-pyridone intermediate that contains the trans bis-diene chain. The biosynthesis of ilicicolin H starts with formation of the tetramic acid by the hybrid PKS-NRPS synthetase iliA with the partnering trans-enoyl reductase iliB since iliA lacks a designated enoylreductase (ER) domain. The cytochrome P450 monooxygenase iliC then catalyzes the ring expansion of the tetramate to the acyclic 2-pyridone. The pericyclase iliD further converts the acyclic 2-pyridone into 8-epi-ilicicolin H. 8-epi-ilicicolin H might then spontaneously convert to ilicicolin H since ilicicolin H is produced in the absence of the epimerase iliE, in contrast to what was observed for the Talaromyces variabilis ilicolin H biosynthetic pathway. The protein is Cytochrome P450 monooxygenase iliC of Neonectria sp. (strain DH2).